A 467-amino-acid chain; its full sequence is 3-isopropylmalate dehydratase large subunit (467 aa).

The [4Fe-4S] cluster site is built by C347, C407, and C410.

This sequence belongs to the aconitase/IPM isomerase family. LeuC type 1 subfamily. In terms of assembly, heterodimer of LeuC and LeuD. Requires [4Fe-4S] cluster as cofactor.

The enzyme catalyses (2R,3S)-3-isopropylmalate = (2S)-2-isopropylmalate. It functions in the pathway amino-acid biosynthesis; L-leucine biosynthesis; L-leucine from 3-methyl-2-oxobutanoate: step 2/4. Catalyzes the isomerization between 2-isopropylmalate and 3-isopropylmalate, via the formation of 2-isopropylmaleate. This Synechococcus sp. (strain JA-3-3Ab) (Cyanobacteria bacterium Yellowstone A-Prime) protein is 3-isopropylmalate dehydratase large subunit.